The sequence spans 789 residues: Ribonucleoside-diphosphate reductase large subunit (789 aa).

Substrate-binding positions include threonine 207, serine 222 to cysteine 223, glycine 253, asparagine 435 to glutamate 439, and proline 620 to serine 624. Cysteine 223 and cysteine 452 are disulfide-bonded. The Proton acceptor role is filled by asparagine 435. Cysteine 437 functions as the Cysteine radical intermediate in the catalytic mechanism. Glutamate 439 serves as the catalytic Proton acceptor.

It belongs to the ribonucleoside diphosphate reductase large chain family. Heterotetramer composed of a homodimer of the large subunit (R1) and a homodimer of the small subunit (R2). Larger multisubunit protein complex are also active, composed of (R1)n(R2)n.

The catalysed reaction is a 2'-deoxyribonucleoside 5'-diphosphate + [thioredoxin]-disulfide + H2O = a ribonucleoside 5'-diphosphate + [thioredoxin]-dithiol. Its function is as follows. Ribonucleoside-diphosphate reductase holoenzyme provides the precursors necessary for viral DNA synthesis. Allows virus growth in non-dividing cells, as well as reactivation from latency in infected hosts. Catalyzes the biosynthesis of deoxyribonucleotides from the corresponding ribonucleotides. The sequence is that of Ribonucleoside-diphosphate reductase large subunit from Equus caballus (Horse).